A 363-amino-acid polypeptide reads, in one-letter code: UDP-N-acetylglucosamine--N-acetylmuramyl-(pentapeptide) pyrophosphoryl-undecaprenol N-acetylglucosamine transferase (363 aa).

Residues 14 to 16, N122, R163, S190, and Q285 each bind UDP-N-acetyl-alpha-D-glucosamine; that span reads TGG.

It belongs to the glycosyltransferase 28 family. MurG subfamily.

It localises to the cell inner membrane. It catalyses the reaction di-trans,octa-cis-undecaprenyl diphospho-N-acetyl-alpha-D-muramoyl-L-alanyl-D-glutamyl-meso-2,6-diaminopimeloyl-D-alanyl-D-alanine + UDP-N-acetyl-alpha-D-glucosamine = di-trans,octa-cis-undecaprenyl diphospho-[N-acetyl-alpha-D-glucosaminyl-(1-&gt;4)]-N-acetyl-alpha-D-muramoyl-L-alanyl-D-glutamyl-meso-2,6-diaminopimeloyl-D-alanyl-D-alanine + UDP + H(+). Its pathway is cell wall biogenesis; peptidoglycan biosynthesis. In terms of biological role, cell wall formation. Catalyzes the transfer of a GlcNAc subunit on undecaprenyl-pyrophosphoryl-MurNAc-pentapeptide (lipid intermediate I) to form undecaprenyl-pyrophosphoryl-MurNAc-(pentapeptide)GlcNAc (lipid intermediate II). This Prochlorococcus marinus (strain MIT 9301) protein is UDP-N-acetylglucosamine--N-acetylmuramyl-(pentapeptide) pyrophosphoryl-undecaprenol N-acetylglucosamine transferase.